The chain runs to 264 residues: O-methyltransferase resE (264 aa).

S-adenosyl-L-methionine contacts are provided by Q97 and H142.

It belongs to the methyltransferase superfamily.

It carries out the reaction desmethylrestrictinol + S-adenosyl-L-methionine = restrictinol + S-adenosyl-L-homocysteine + H(+). The protein operates within antifungal biosynthesis. In terms of biological role, O-methyltransferase; part of the gene cluster that mediates the biosynthesis of the tetrahydropyranyl antifungal agent restricticin that acts as an inhibitor of CYP51 and blocks the ergosterol biosynthesis. Within the pathway, resE uses S-adenosylmethionine to methylate position C4 of desmethylrestrictinol to produce restrictinol. The highly reducing polyketide synthase resH, the short chain dehydrogenase resG, the cyclase resF, the FAD-dependent monooxygenase resA and the enoylreductase resD are required to generate the first stable intermediate desmethylrestrictinol. ResH with resD biosynthesize the first polyketide chain intermediate that is reduced by resG, followed by epoxidation by resA before 6-endo cyclization via epoxide opening by resF leads to desmethylrestrictinol. The methyltransferase resE then catalyzes the C4 O-methylation of desmethylrestrictinol to produce restrictinol, and the nonribosomal peptide synthetase resC catalyzes the C3 esterification of restrictinol with glycine that leads to restricticin. The polypeptide is O-methyltransferase resE (Aspergillus sclerotiorum).